A 152-amino-acid chain; its full sequence is UPF0266 membrane protein YobD (152 aa).

The next 3 helical transmembrane spans lie at 6-26 (LVLI…QFIM), 45-65 (IDSV…VTNH), and 67-87 (ALIT…IFWI).

This sequence belongs to the UPF0266 family.

Its subcellular location is the cell inner membrane. This is UPF0266 membrane protein YobD from Escherichia coli O127:H6 (strain E2348/69 / EPEC).